We begin with the raw amino-acid sequence, 335 residues long: Antigen-presenting glycoprotein CD1d (335 aa).

Residues 1 to 19 (MGCLLFLLLWALLQAWGSA) form the signal peptide. The Extracellular segment spans residues 20–301 (EVPQRLFPLR…VLYWGGSYTS (282 aa)). 2 N-linked (GlcNAc...) asparagine glycosylation sites follow: asparagine 38 and asparagine 60. A D-galactosylceramide is bound at residue aspartate 98. Disulfide bonds link cysteine 120-cysteine 184 and cysteine 224-cysteine 279. A glycan (N-linked (GlcNAc...) asparagine) is linked at asparagine 126. 169–172 (DKWT) provides a ligand contact to a D-galactosylceramide. Residue asparagine 181 is glycosylated (N-linked (GlcNAc...) asparagine). The region spanning 185–292 (PQFVSGLLES…HSSLEGQDIV (108 aa)) is the Ig-like domain. The helical transmembrane segment at 302–322 (MGLIALAVLACLLFLLIVGFT) threads the bilayer. Over 323–335 (SRFKRQTSYQGVL) the chain is Cytoplasmic. The Internalization signal motif lies at 331–334 (YQGV).

In terms of assembly, heterodimer with B2M (beta-2-microglobulin). Interacts with MHC II. As to expression, expressed on cortical thymocytes, on certain T-cell leukemias, and in various other tissues.

It is found in the cell membrane. The protein localises to the basolateral cell membrane. The protein resides in the endosome membrane. It localises to the lysosome membrane. Its subcellular location is the endoplasmic reticulum membrane. Antigen-presenting protein that binds self and non-self glycolipids and presents them to T-cell receptors on natural killer T-cells. In Homo sapiens (Human), this protein is Antigen-presenting glycoprotein CD1d (CD1D).